The following is a 140-amino-acid chain: Nuclear receptor 2C2-associated protein (140 aa).

Belongs to the NR2C2AP family. As to quaternary structure, interacts with NR2C2/TR4.

It is found in the nucleus. In terms of biological role, may act as a repressor of NR2C2-mediated transactivation by suppressing the binding between NR2C2/TR4 and the TR4-response element in target genes. The chain is Nuclear receptor 2C2-associated protein (Nr2c2ap) from Mus musculus (Mouse).